The following is a 357-amino-acid chain: Fructose-bisphosphate aldolase (357 aa).

Substrate-binding residues include Arg-49 and Lys-140. The active-site Proton acceptor is Glu-183. Lys-225 (schiff-base intermediate with dihydroxyacetone-P) is an active-site residue.

Belongs to the class I fructose-bisphosphate aldolase family.

The enzyme catalyses beta-D-fructose 1,6-bisphosphate = D-glyceraldehyde 3-phosphate + dihydroxyacetone phosphate. It participates in carbohydrate degradation; glycolysis; D-glyceraldehyde 3-phosphate and glycerone phosphate from D-glucose: step 4/4. The polypeptide is Fructose-bisphosphate aldolase (fba) (Dictyostelium discoideum (Social amoeba)).